Reading from the N-terminus, the 622-residue chain is Chaperone protein HscA homolog (622 aa).

This sequence belongs to the heat shock protein 70 family.

Chaperone involved in the maturation of iron-sulfur cluster-containing proteins. Has a low intrinsic ATPase activity which is markedly stimulated by HscB. This is Chaperone protein HscA homolog from Burkholderia pseudomallei (strain 1710b).